Reading from the N-terminus, the 189-residue chain is Putative nucleotidase BC_3386 (189 aa).

It belongs to the 5'(3')-deoxyribonucleotidase family.

In Bacillus cereus (strain ATCC 14579 / DSM 31 / CCUG 7414 / JCM 2152 / NBRC 15305 / NCIMB 9373 / NCTC 2599 / NRRL B-3711), this protein is Putative nucleotidase BC_3386.